The primary structure comprises 479 residues: UDP-N-acetylmuramate--L-alanine ligase (479 aa).

Residue 114–120 (GTHGKTT) coordinates ATP.

This sequence belongs to the MurCDEF family.

The protein localises to the cytoplasm. It carries out the reaction UDP-N-acetyl-alpha-D-muramate + L-alanine + ATP = UDP-N-acetyl-alpha-D-muramoyl-L-alanine + ADP + phosphate + H(+). The protein operates within cell wall biogenesis; peptidoglycan biosynthesis. Its function is as follows. Cell wall formation. This Pelodictyon phaeoclathratiforme (strain DSM 5477 / BU-1) protein is UDP-N-acetylmuramate--L-alanine ligase.